Reading from the N-terminus, the 265-residue chain is S-adenosylmethionine decarboxylase proenzyme (265 aa).

Ser114 (schiff-base intermediate with substrate; via pyruvic acid) is an active-site residue. The residue at position 114 (Ser114) is a Pyruvic acid (Ser); by autocatalysis. Catalysis depends on His119, which acts as the Proton acceptor; for processing activity. Cys142 acts as the Proton donor; for catalytic activity in catalysis.

It belongs to the prokaryotic AdoMetDC family. Type 2 subfamily. Heterooctamer of four alpha and four beta chains arranged as a tetramer of alpha/beta heterodimers. Requires pyruvate as cofactor. In terms of processing, is synthesized initially as an inactive proenzyme. Formation of the active enzyme involves a self-maturation process in which the active site pyruvoyl group is generated from an internal serine residue via an autocatalytic post-translational modification. Two non-identical subunits are generated from the proenzyme in this reaction, and the pyruvate is formed at the N-terminus of the alpha chain, which is derived from the carboxyl end of the proenzyme. The post-translation cleavage follows an unusual pathway, termed non-hydrolytic serinolysis, in which the side chain hydroxyl group of the serine supplies its oxygen atom to form the C-terminus of the beta chain, while the remainder of the serine residue undergoes an oxidative deamination to produce ammonia and the pyruvoyl group blocking the N-terminus of the alpha chain.

The enzyme catalyses S-adenosyl-L-methionine + H(+) = S-adenosyl 3-(methylsulfanyl)propylamine + CO2. It participates in amine and polyamine biosynthesis; S-adenosylmethioninamine biosynthesis; S-adenosylmethioninamine from S-adenosyl-L-methionine: step 1/1. Catalyzes the decarboxylation of S-adenosylmethionine to S-adenosylmethioninamine (dcAdoMet), the propylamine donor required for the synthesis of the polyamines spermine and spermidine from the diamine putrescine. This chain is S-adenosylmethionine decarboxylase proenzyme, found in Buchnera aphidicola subsp. Acyrthosiphon pisum (strain APS) (Acyrthosiphon pisum symbiotic bacterium).